Reading from the N-terminus, the 427-residue chain is MKLNKLAIATLVSAALSQYAFAQTDTKGTIYLTFDDGPINASIDVINVLNQEEVKATFYFNAWHLDGIGDENEDRALEALKLALDSGHIVANHSYDHMVHNCVEEFGPNSAAECNATGDHQINSYQDPAYDASMFAENLSVLEKYLPNITSYPNYKANEFARLPYTNGWRVTKDFKADGLCATSDDLKPWEPGYSCDTANPSNSVKAAIAVQNILANNGYQTHGWDVDWAPENWGIAMPANSLTEAEPFLGYVDSALNTCAPTTINPINSKAQEFPCGTPLHADKVIVLTHEFLFEDGKRGMGATQNLPKLAKFIQLAKQAGYVFDTMDNYTPNWQVGNNYSAGDYVLHLGTVYQAVTSHTAQQDWAPSPTSSLWTNADPATNWTQNVSYKQGDVVTYQGLRYLVNVPHVSQADWTPNSQNTLFTAL.

The signal sequence occupies residues 1–22 (MKLNKLAIATLVSAALSQYAFA). The NodB homology domain maps to 28–326 (GTIYLTFDDG…LAKQAGYVFD (299 aa)). Chitin-binding type-3 domains are found at residues 333–375 (PNWQ…SSLW) and 382–419 (TNWT…TPNS).

This sequence belongs to the polysaccharide deacetylase family. Carbohydrate-binding module 12 subfamily.

It catalyses the reaction N,N'-diacetylchitobiose + H2O = N-acetyl-beta-D-glucosaminyl-(1-&gt;4)-D-glucosamine + acetate. It participates in glycan degradation; chitin degradation. Specifically catalyzes the degradation of N,N'-diacetylchitobiose. Key enzyme in the chitin catabolic cascade. This Vibrio alginolyticus protein is Chitin disaccharide deacetylase (deaA).